Reading from the N-terminus, the 428-residue chain is MSNIVIVGAQWGDEGKGKIADTLAEKADLVVRYQGGNNAGHTLVVNGKKTFLHLIPSGVLHQHTKCVIGHGVVLDPVALDEEITRLQATGIAISAENLFVSESCTIITSYHKLLDAVRESNTSEKIGTTGKGIGPAYEDKVSRKGIKFKHLFDKDVLRSRLAISLAEKETLFRDLYKVEYPTLEQEFDKLFALGQKLKQYAADTFSIIDQAIAAGKNVVYEGAQGVLLDVDYGTYPFVTSSNTSVAGVYSGATTAGHGLDHVIGITKAYTTRVGEGPFPTELFDDVGKFIQHKGGEIGVTTGRIRRCGWLDLPLLKYSAKCSNLTSIALTKVDVLSDMDTLKVCIGYKYEGREIYCAYPGIDLYKVEPILVEMEPFSINETVTKDNIPAALKTYLKTIENHVGIPISSLAYGPSREQILFFEDYFKKG.

GTP-binding positions include 12–18 (GDEGKGK) and 40–42 (GHT). Asp13 acts as the Proton acceptor in catalysis. The Mg(2+) site is built by Asp13 and Gly40. IMP contacts are provided by residues 13-16 (DEGK), 38-41 (NAGH), Thr129, Arg143, Gln224, Thr239, and Arg303. His41 (proton donor) is an active-site residue. 299–305 (VTTGRIR) contributes to the substrate binding site. Residues Arg305, 331–333 (KVD), and 410–412 (AYG) contribute to the GTP site.

It belongs to the adenylosuccinate synthetase family. In terms of assembly, homodimer. Requires Mg(2+) as cofactor.

Its subcellular location is the cytoplasm. The enzyme catalyses IMP + L-aspartate + GTP = N(6)-(1,2-dicarboxyethyl)-AMP + GDP + phosphate + 2 H(+). The protein operates within purine metabolism; AMP biosynthesis via de novo pathway; AMP from IMP: step 1/2. In terms of biological role, plays an important role in the de novo pathway of purine nucleotide biosynthesis. Catalyzes the first committed step in the biosynthesis of AMP from IMP. This is Adenylosuccinate synthetase from Francisella tularensis subsp. novicida (strain U112).